Reading from the N-terminus, the 348-residue chain is Holliday junction branch migration complex subunit RuvB (348 aa).

Positions 1 to 182 (MRIELLNTPA…FGINSRFDYY (182 aa)) are large ATPase domain (RuvB-L). Residues isoleucine 21, arginine 22, glycine 63, lysine 66, threonine 67, threonine 68, 129–131 (EDF), arginine 172, tyrosine 182, and arginine 219 contribute to the ATP site. Mg(2+) is bound at residue threonine 67. A small ATPAse domain (RuvB-S) region spans residues 183-253 (SADLLEKIII…IAMTTLDCLE (71 aa)). The segment at 256-348 (EEGLDDMDKK…EFPLEDDQRQ (93 aa)) is head domain (RuvB-H). DNA is bound by residues arginine 311 and arginine 316.

It belongs to the RuvB family. As to quaternary structure, homohexamer. Forms an RuvA(8)-RuvB(12)-Holliday junction (HJ) complex. HJ DNA is sandwiched between 2 RuvA tetramers; dsDNA enters through RuvA and exits via RuvB. An RuvB hexamer assembles on each DNA strand where it exits the tetramer. Each RuvB hexamer is contacted by two RuvA subunits (via domain III) on 2 adjacent RuvB subunits; this complex drives branch migration. In the full resolvosome a probable DNA-RuvA(4)-RuvB(12)-RuvC(2) complex forms which resolves the HJ.

Its subcellular location is the cytoplasm. The enzyme catalyses ATP + H2O = ADP + phosphate + H(+). In terms of biological role, the RuvA-RuvB-RuvC complex processes Holliday junction (HJ) DNA during genetic recombination and DNA repair, while the RuvA-RuvB complex plays an important role in the rescue of blocked DNA replication forks via replication fork reversal (RFR). RuvA specifically binds to HJ cruciform DNA, conferring on it an open structure. The RuvB hexamer acts as an ATP-dependent pump, pulling dsDNA into and through the RuvAB complex. RuvB forms 2 homohexamers on either side of HJ DNA bound by 1 or 2 RuvA tetramers; 4 subunits per hexamer contact DNA at a time. Coordinated motions by a converter formed by DNA-disengaged RuvB subunits stimulates ATP hydrolysis and nucleotide exchange. Immobilization of the converter enables RuvB to convert the ATP-contained energy into a lever motion, pulling 2 nucleotides of DNA out of the RuvA tetramer per ATP hydrolyzed, thus driving DNA branch migration. The RuvB motors rotate together with the DNA substrate, which together with the progressing nucleotide cycle form the mechanistic basis for DNA recombination by continuous HJ branch migration. Branch migration allows RuvC to scan DNA until it finds its consensus sequence, where it cleaves and resolves cruciform DNA. This is Holliday junction branch migration complex subunit RuvB from Chlorobium limicola (strain DSM 245 / NBRC 103803 / 6330).